The following is a 39-amino-acid chain: Cytochrome b559 subunit beta (39 aa).

Residues 14–30 form a helical membrane-spanning segment; the sequence is WLAVHGLAVPTVFFLGS. Histidine 18 is a heme binding site.

This sequence belongs to the PsbE/PsbF family. As to quaternary structure, heterodimer of an alpha subunit and a beta subunit. PSII is composed of 1 copy each of membrane proteins PsbA, PsbB, PsbC, PsbD, PsbE, PsbF, PsbH, PsbI, PsbJ, PsbK, PsbL, PsbM, PsbT, PsbX, PsbY, PsbZ, Psb30/Ycf12, at least 3 peripheral proteins of the oxygen-evolving complex and a large number of cofactors. It forms dimeric complexes. The cofactor is heme b.

The protein localises to the plastid. Its subcellular location is the chloroplast thylakoid membrane. Its function is as follows. This b-type cytochrome is tightly associated with the reaction center of photosystem II (PSII). PSII is a light-driven water:plastoquinone oxidoreductase that uses light energy to abstract electrons from H(2)O, generating O(2) and a proton gradient subsequently used for ATP formation. It consists of a core antenna complex that captures photons, and an electron transfer chain that converts photonic excitation into a charge separation. This Pinus koraiensis (Korean pine) protein is Cytochrome b559 subunit beta.